The sequence spans 436 residues: Adenylosuccinate synthetase (436 aa).

Residues 12–18 and 40–42 contribute to the GTP site; these read GDEGKGK and GHT. Aspartate 13 functions as the Proton acceptor in the catalytic mechanism. Residues aspartate 13 and glycine 40 each contribute to the Mg(2+) site. Residues 13-16, 38-41, threonine 128, arginine 142, glutamine 223, threonine 238, and arginine 302 each bind IMP; these read DEGK and NAGH. Histidine 41 acts as the Proton donor in catalysis. Position 298-304 (298-304) interacts with substrate; it reads TTTGRRR. GTP-binding positions include arginine 304, 330–332, and 412–414; these read KLD and SLG.

The protein belongs to the adenylosuccinate synthetase family. Homodimer. It depends on Mg(2+) as a cofactor.

It localises to the cytoplasm. It carries out the reaction IMP + L-aspartate + GTP = N(6)-(1,2-dicarboxyethyl)-AMP + GDP + phosphate + 2 H(+). It participates in purine metabolism; AMP biosynthesis via de novo pathway; AMP from IMP: step 1/2. Functionally, plays an important role in the de novo pathway of purine nucleotide biosynthesis. Catalyzes the first committed step in the biosynthesis of AMP from IMP. This Prochlorococcus marinus (strain AS9601) protein is Adenylosuccinate synthetase.